The primary structure comprises 574 residues: Protein misato (574 aa).

This sequence belongs to the misato family.

The protein resides in the mitochondrion. In Drosophila melanogaster (Fruit fly), this protein is Protein misato (mst).